An 83-amino-acid chain; its full sequence is Protein YqgD (83 aa).

It belongs to the YqgD family.

In Escherichia coli (strain K12), this protein is Protein YqgD (yqgD).